Consider the following 417-residue polypeptide: MFPRDVRIESYDPELAKAIAAETQRQEDHVELIASENYTSPAVMEAQGSQLTNKYAEGYPGKRYYGGCEYVDIAEQLAIDRLKQLFGADYANVQPHSGSQANQAVYFALLQPGDTILGMSLAHGGHLTHGAKVNASGKLFNAVQYGVNDQGLIDYDEVERLALEHKPKMVVAGFSAYSQVIDWARFRAIADKVGAYLFVDMAHVAGLVAAGVYPSPLEHAHVVTSTTHKTLRGPRGGIIVAKGAGEDLVKKLQSIVFPGIQGGPLMHVIAGKAVAFKEALEPGFKAYQQQVVKNAQAMANTLIARGYKIVSGGTQNHLMLVDMIGKDVSGKDAEAALGKAHITVNKNSVPNDPRSPFVTSGLRLGTPAVTTRGYVEQDCVDLANWIADVLDAPSDDAVIARVRDAVSAQCRKYPVYG.

(6S)-5,6,7,8-tetrahydrofolate-binding positions include Leu-121 and 125-127; that span reads GHL. Lys-229 is subject to N6-(pyridoxal phosphate)lysine. Residue 355 to 357 coordinates (6S)-5,6,7,8-tetrahydrofolate; sequence SPF.

This sequence belongs to the SHMT family. As to quaternary structure, homodimer. Requires pyridoxal 5'-phosphate as cofactor.

Its subcellular location is the cytoplasm. The enzyme catalyses (6R)-5,10-methylene-5,6,7,8-tetrahydrofolate + glycine + H2O = (6S)-5,6,7,8-tetrahydrofolate + L-serine. Its pathway is one-carbon metabolism; tetrahydrofolate interconversion. It functions in the pathway amino-acid biosynthesis; glycine biosynthesis; glycine from L-serine: step 1/1. In terms of biological role, catalyzes the reversible interconversion of serine and glycine with tetrahydrofolate (THF) serving as the one-carbon carrier. This reaction serves as the major source of one-carbon groups required for the biosynthesis of purines, thymidylate, methionine, and other important biomolecules. Also exhibits THF-independent aldolase activity toward beta-hydroxyamino acids, producing glycine and aldehydes, via a retro-aldol mechanism. The chain is Serine hydroxymethyltransferase from Stenotrophomonas maltophilia (strain R551-3).